The primary structure comprises 330 residues: Nodulation protein D 2 (330 aa).

The region spanning Leu6 to Ser63 is the HTH lysR-type domain. A DNA-binding region (H-T-H motif) is located at residues Leu23–Ala42. Residues Arg308 to Pro330 are disordered.

The protein belongs to the LysR transcriptional regulatory family.

Functionally, nodD regulates the expression of the nodABCFE genes which encode other nodulation proteins. NodD is also a negative regulator of its own expression. Binds flavonoids as inducers. The polypeptide is Nodulation protein D 2 (nodD2) (Bradyrhizobium diazoefficiens (strain JCM 10833 / BCRC 13528 / IAM 13628 / NBRC 14792 / USDA 110)).